Here is a 509-residue protein sequence, read N- to C-terminus: Maturase K (509 aa).

It belongs to the intron maturase 2 family. MatK subfamily.

Its subcellular location is the plastid. The protein resides in the chloroplast. Usually encoded in the trnK tRNA gene intron. Probably assists in splicing its own and other chloroplast group II introns. The sequence is that of Maturase K from Stylosanthes hamata (Caribbean stylo).